The sequence spans 444 residues: Argininosuccinate synthase (444 aa).

ATP is bound by residues 18-26 (AFSGGLDTS) and Ala-44. Position 100 (Tyr-100) interacts with L-citrulline. Residues Gly-130 and Thr-132 each coordinate ATP. Residues Thr-132, Asn-136, and Asp-137 each contribute to the L-aspartate site. An L-citrulline-binding site is contributed by Asn-136. Asp-137 lines the ATP pocket. Residues Arg-140 and Ser-193 each coordinate L-citrulline. An ATP-binding site is contributed by Asp-195. The L-citrulline site is built by Thr-202, Glu-204, and Glu-281.

Belongs to the argininosuccinate synthase family. Type 2 subfamily. As to quaternary structure, homotetramer.

It is found in the cytoplasm. The catalysed reaction is L-citrulline + L-aspartate + ATP = 2-(N(omega)-L-arginino)succinate + AMP + diphosphate + H(+). It participates in amino-acid biosynthesis; L-arginine biosynthesis; L-arginine from L-ornithine and carbamoyl phosphate: step 2/3. The protein is Argininosuccinate synthase of Actinobacillus succinogenes (strain ATCC 55618 / DSM 22257 / CCUG 43843 / 130Z).